Consider the following 229-residue polypeptide: Putative N-acetylmannosamine-6-phosphate 2-epimerase (229 aa).

The protein belongs to the NanE family.

The enzyme catalyses an N-acyl-D-glucosamine 6-phosphate = an N-acyl-D-mannosamine 6-phosphate. Its pathway is amino-sugar metabolism; N-acetylneuraminate degradation; D-fructose 6-phosphate from N-acetylneuraminate: step 3/5. Functionally, converts N-acetylmannosamine-6-phosphate (ManNAc-6-P) to N-acetylglucosamine-6-phosphate (GlcNAc-6-P). This chain is Putative N-acetylmannosamine-6-phosphate 2-epimerase, found in Shigella flexneri serotype 5b (strain 8401).